A 510-amino-acid chain; its full sequence is 2,3-bisphosphoglycerate-independent phosphoglycerate mutase (510 aa).

The Mn(2+) site is built by Asp12 and Ser62. Ser62 functions as the Phosphoserine intermediate in the catalytic mechanism. Substrate is bound by residues His121, 151–152, Arg183, Arg189, 258–261, and Lys331; these read RD and RPDR. 5 residues coordinate Mn(2+): Asp398, His402, Asp439, His440, and His458.

The protein belongs to the BPG-independent phosphoglycerate mutase family. As to quaternary structure, monomer. Requires Mn(2+) as cofactor.

It carries out the reaction (2R)-2-phosphoglycerate = (2R)-3-phosphoglycerate. It participates in carbohydrate degradation; glycolysis; pyruvate from D-glyceraldehyde 3-phosphate: step 3/5. Its function is as follows. Catalyzes the interconversion of 2-phosphoglycerate and 3-phosphoglycerate. The protein is 2,3-bisphosphoglycerate-independent phosphoglycerate mutase of Clostridioides difficile (strain 630) (Peptoclostridium difficile).